A 372-amino-acid polypeptide reads, in one-letter code: Oxysterol-binding protein 3 (372 aa).

Residues 1–10 (MGKSDRKLTE) show a composition bias toward basic and acidic residues. Residues 1–25 (MGKSDRKLTEENSIENGVKPGKLTE) are disordered.

This sequence belongs to the OSBP family.

In Dictyostelium discoideum (Social amoeba), this protein is Oxysterol-binding protein 3 (osbC).